Here is a 330-residue protein sequence, read N- to C-terminus: Ketol-acid reductoisomerase (NADP(+)) (330 aa).

In terms of domain architecture, KARI N-terminal Rossmann spans 1 to 181 (MNAYYEQDAD…GGTKAGVIET (181 aa)). Residues 24-27 (YGSQ), Arg47, Ser50, Ser52, and 82-85 (DQYQ) contribute to the NADP(+) site. His107 is a catalytic residue. Gly133 contacts NADP(+). The KARI C-terminal knotted domain occupies 182–327 (TFKNETETDL…SKLRDMMSWL (146 aa)). Asp190, Glu194, Glu226, and Glu230 together coordinate Mg(2+). Ser251 provides a ligand contact to substrate.

This sequence belongs to the ketol-acid reductoisomerase family. Mg(2+) is required as a cofactor.

It catalyses the reaction (2R)-2,3-dihydroxy-3-methylbutanoate + NADP(+) = (2S)-2-acetolactate + NADPH + H(+). It carries out the reaction (2R,3R)-2,3-dihydroxy-3-methylpentanoate + NADP(+) = (S)-2-ethyl-2-hydroxy-3-oxobutanoate + NADPH + H(+). The protein operates within amino-acid biosynthesis; L-isoleucine biosynthesis; L-isoleucine from 2-oxobutanoate: step 2/4. It participates in amino-acid biosynthesis; L-valine biosynthesis; L-valine from pyruvate: step 2/4. In terms of biological role, involved in the biosynthesis of branched-chain amino acids (BCAA). Catalyzes an alkyl-migration followed by a ketol-acid reduction of (S)-2-acetolactate (S2AL) to yield (R)-2,3-dihydroxy-isovalerate. In the isomerase reaction, S2AL is rearranged via a Mg-dependent methyl migration to produce 3-hydroxy-3-methyl-2-ketobutyrate (HMKB). In the reductase reaction, this 2-ketoacid undergoes a metal-dependent reduction by NADPH to yield (R)-2,3-dihydroxy-isovalerate. This Chlorobium limicola (strain DSM 245 / NBRC 103803 / 6330) protein is Ketol-acid reductoisomerase (NADP(+)).